Reading from the N-terminus, the 270-residue chain is 5-deoxy-glucuronate isomerase (270 aa).

The protein belongs to the isomerase IolB family.

The enzyme catalyses 5-deoxy-D-glucuronate = 5-dehydro-2-deoxy-D-gluconate. It participates in polyol metabolism; myo-inositol degradation into acetyl-CoA; acetyl-CoA from myo-inositol: step 4/7. In terms of biological role, involved in the isomerization of 5-deoxy-glucuronate (5DG) to 5-dehydro-2-deoxy-D-gluconate (DKG or 2-deoxy-5-keto-D-gluconate). This chain is 5-deoxy-glucuronate isomerase, found in Halalkalibacterium halodurans (strain ATCC BAA-125 / DSM 18197 / FERM 7344 / JCM 9153 / C-125) (Bacillus halodurans).